The sequence spans 202 residues: Transmembrane protein 223 (202 aa).

Topologically, residues 1–43 are mitochondrial matrix; that stretch reads MAAPWRRWPTGLLAVLRPLLTCRPLQGTTLQRDVLLFEHDRGR. The helical transmembrane segment at 44–64 threads the bilayer; it reads FFTILGLFCAGQGVFWASMAV. At 65-97 the chain is on the mitochondrial intermembrane side; the sequence is AAVSRPPVPVQPLDAEVPNRGPFDLRSALWRYG. A helical transmembrane segment spans residues 98–118; that stretch reads LAVGCGAIGALVLGAGLLFSL. Residues 119 to 202 are Mitochondrial matrix-facing; that stretch reads RSVRSVVLRA…DNTVGAYRSL (84 aa).

This sequence belongs to the TMEM223 family. In terms of assembly, associates with the mitochondrial ribosome.

Its subcellular location is the mitochondrion inner membrane. In terms of biological role, mitochondrial ribosome-associated protein involved in the first steps of cytochrome c oxidase complex (complex IV) biogenesis. Stimulates the translation of MT-CO1 mRNA and is a constituent of early MT-CO1 assembly intermediates. This is Transmembrane protein 223 from Homo sapiens (Human).